Reading from the N-terminus, the 332-residue chain is Holliday junction branch migration complex subunit RuvB (332 aa).

The large ATPase domain (RuvB-L) stretch occupies residues 1–181; that stretch reads MARILDNNVM…FGITGHMEYY (181 aa). ATP-binding positions include leucine 20, arginine 21, glycine 62, lysine 65, threonine 66, threonine 67, 128–130, arginine 171, tyrosine 181, and arginine 218; that span reads EDF. Threonine 66 provides a ligand contact to Mg(2+). The small ATPAse domain (RuvB-S) stretch occupies residues 182-252; that stretch reads QEKDLTEIVE…ITDRALTMLD (71 aa). The segment at 255–332 is head domain (RuvB-H); the sequence is REGLNYIDQK…RHLGYPYQNT (78 aa). DNA-binding residues include arginine 291, arginine 310, arginine 312, and arginine 315.

It belongs to the RuvB family. In terms of assembly, homohexamer. Forms an RuvA(8)-RuvB(12)-Holliday junction (HJ) complex. HJ DNA is sandwiched between 2 RuvA tetramers; dsDNA enters through RuvA and exits via RuvB. An RuvB hexamer assembles on each DNA strand where it exits the tetramer. Each RuvB hexamer is contacted by two RuvA subunits (via domain III) on 2 adjacent RuvB subunits; this complex drives branch migration. In the full resolvosome a probable DNA-RuvA(4)-RuvB(12)-RuvC(2) complex forms which resolves the HJ.

The protein localises to the cytoplasm. The enzyme catalyses ATP + H2O = ADP + phosphate + H(+). The RuvA-RuvB-RuvC complex processes Holliday junction (HJ) DNA during genetic recombination and DNA repair, while the RuvA-RuvB complex plays an important role in the rescue of blocked DNA replication forks via replication fork reversal (RFR). RuvA specifically binds to HJ cruciform DNA, conferring on it an open structure. The RuvB hexamer acts as an ATP-dependent pump, pulling dsDNA into and through the RuvAB complex. RuvB forms 2 homohexamers on either side of HJ DNA bound by 1 or 2 RuvA tetramers; 4 subunits per hexamer contact DNA at a time. Coordinated motions by a converter formed by DNA-disengaged RuvB subunits stimulates ATP hydrolysis and nucleotide exchange. Immobilization of the converter enables RuvB to convert the ATP-contained energy into a lever motion, pulling 2 nucleotides of DNA out of the RuvA tetramer per ATP hydrolyzed, thus driving DNA branch migration. The RuvB motors rotate together with the DNA substrate, which together with the progressing nucleotide cycle form the mechanistic basis for DNA recombination by continuous HJ branch migration. Branch migration allows RuvC to scan DNA until it finds its consensus sequence, where it cleaves and resolves cruciform DNA. In Streptococcus pyogenes serotype M18 (strain MGAS8232), this protein is Holliday junction branch migration complex subunit RuvB.